We begin with the raw amino-acid sequence, 138 residues long: Large ribosomal subunit protein uL16 (138 aa).

This sequence belongs to the universal ribosomal protein uL16 family. As to quaternary structure, part of the 50S ribosomal subunit.

Functionally, binds 23S rRNA and is also seen to make contacts with the A and possibly P site tRNAs. This Paramagnetospirillum magneticum (strain ATCC 700264 / AMB-1) (Magnetospirillum magneticum) protein is Large ribosomal subunit protein uL16.